The chain runs to 124 residues: Small ribosomal subunit protein uS12 (124 aa).

Positions 8-30 are disordered; it reads IRSARQDTEKQTKSPALKSCPQR. D89 carries the 3-methylthioaspartic acid modification. The segment at 103–124 is disordered; it reads DTAGVKDRKQSRSKYGAKKPKA. Residues 113–124 are compositionally biased toward basic residues; the sequence is SRSKYGAKKPKA.

Belongs to the universal ribosomal protein uS12 family. Part of the 30S ribosomal subunit. Contacts proteins S8 and S17. May interact with IF1 in the 30S initiation complex.

Functionally, with S4 and S5 plays an important role in translational accuracy. In terms of biological role, interacts with and stabilizes bases of the 16S rRNA that are involved in tRNA selection in the A site and with the mRNA backbone. Located at the interface of the 30S and 50S subunits, it traverses the body of the 30S subunit contacting proteins on the other side and probably holding the rRNA structure together. The combined cluster of proteins S8, S12 and S17 appears to hold together the shoulder and platform of the 30S subunit. This Trichodesmium erythraeum (strain IMS101) protein is Small ribosomal subunit protein uS12.